A 45-amino-acid chain; its full sequence is Thymosin beta (45 aa).

The tract at residues 1–45 (MADKPNMTEITSFDKTKLRKTETQEKNPLPTKETIEQERQGESTP) is disordered. 2 stretches are compositionally biased toward basic and acidic residues: residues 12–25 (SFDK…ETQE) and 33–45 (ETIE…ESTP).

This sequence belongs to the thymosin beta family.

It localises to the cytoplasm. It is found in the cytoskeleton. Plays an important role in the organization of the cytoskeleton. Binds to and sequesters actin monomers (G actin) and therefore inhibits actin polymerization. The sequence is that of Thymosin beta (tmsb) from Danio rerio (Zebrafish).